The following is a 324-amino-acid chain: tRNA dimethylallyltransferase (324 aa).

17–24 (GPTASGKT) provides a ligand contact to ATP. 19 to 24 (TASGKT) provides a ligand contact to substrate. Interaction with substrate tRNA stretches follow at residues 42–45 (DSAL), 166–170 (QRIQR), 251–256 (RCVGYR), and 284–291 (KRQITWLR).

It belongs to the IPP transferase family. Monomer. It depends on Mg(2+) as a cofactor.

It catalyses the reaction adenosine(37) in tRNA + dimethylallyl diphosphate = N(6)-dimethylallyladenosine(37) in tRNA + diphosphate. Functionally, catalyzes the transfer of a dimethylallyl group onto the adenine at position 37 in tRNAs that read codons beginning with uridine, leading to the formation of N6-(dimethylallyl)adenosine (i(6)A). The chain is tRNA dimethylallyltransferase from Burkholderia orbicola (strain MC0-3).